Here is a 243-residue protein sequence, read N- to C-terminus: Probable transcriptional regulatory protein BAV2207 (243 aa).

Positions 1 to 21 are disordered; the sequence is MAGHSKWANIQHRKGRQDAKR.

It belongs to the TACO1 family.

It localises to the cytoplasm. The chain is Probable transcriptional regulatory protein BAV2207 from Bordetella avium (strain 197N).